Reading from the N-terminus, the 230-residue chain is Heptaprenylglyceryl phosphate synthase (230 aa).

Lys12 contacts sn-glycerol 1-phosphate. Mg(2+)-binding residues include Asp14 and Thr40. Sn-glycerol 1-phosphate is bound by residues 159-164 (YIEYSG), Gly189, and 209-210 (GD).

The protein belongs to the GGGP/HepGP synthase family. Group I subfamily. As to quaternary structure, homodimer. Requires Mg(2+) as cofactor.

The catalysed reaction is sn-glycerol 1-phosphate + all-trans-heptaprenyl diphosphate = 3-heptaprenyl-sn-glycero-1-phosphate + diphosphate. Its pathway is membrane lipid metabolism; glycerophospholipid metabolism. Prenyltransferase that catalyzes in vivo the transfer of the heptaprenyl moiety of heptaprenyl pyrophosphate (HepPP; 35 carbon atoms) to the C3 hydroxyl of sn-glycerol-1-phosphate (G1P), producing heptaprenylglyceryl phosphate (HepGP). This reaction is an ether-bond-formation step in the biosynthesis of archaea-type G1P-based membrane lipids found in Bacillales. This chain is Heptaprenylglyceryl phosphate synthase, found in Staphylococcus aureus (strain JH1).